We begin with the raw amino-acid sequence, 245 residues long: tRNA pseudouridine synthase A (245 aa).

Residue Asp-52 is the Nucleophile of the active site. Substrate is bound at residue Tyr-111.

It belongs to the tRNA pseudouridine synthase TruA family. In terms of assembly, homodimer.

The enzyme catalyses uridine(38/39/40) in tRNA = pseudouridine(38/39/40) in tRNA. Functionally, formation of pseudouridine at positions 38, 39 and 40 in the anticodon stem and loop of transfer RNAs. The chain is tRNA pseudouridine synthase A from Ehrlichia canis (strain Jake).